We begin with the raw amino-acid sequence, 176 residues long: Oleosin Ara h 14.0101 (176 aa).

N-acetylalanine; alternate is present on alanine 2. 2 helical membrane-spanning segments follow: residues 50-80 (IIAVLVGVPTGGTLLLLSGLSLLGTIIGLAI) and 95-117 (AVVTIGLAVTGILTAGACGLTGL). The disordered stretch occupies residues 157–176 (TKDAGQQIQTKAQDVKRSSS).

It belongs to the oleosin family. As to quaternary structure, homodimer. Forms oligomers. Expressed in seeds (at protein level). Not expressed in leaves.

It localises to the lipid droplet. Its subcellular location is the membrane. May have a structural role to stabilize the lipid body during desiccation of the seed by preventing coalescence of the oil. Probably interacts with both lipid and phospholipid moieties of lipid bodies. May also provide recognition signals for specific lipase anchorage in lipolysis during seedling growth. This Arachis hypogaea (Peanut) protein is Oleosin Ara h 14.0101.